Here is a 145-residue protein sequence, read N- to C-terminus: Large ribosomal subunit protein uL11m (145 aa).

This sequence belongs to the universal ribosomal protein uL11 family.

It localises to the mitochondrion. This Reclinomonas americana protein is Large ribosomal subunit protein uL11m (RPL11).